The chain runs to 336 residues: UPF0324 membrane protein PM1461 (336 aa).

The next 10 helical transmembrane spans lie at 5–23, 30–52, 62–84, 91–113, 123–140, 153–175, 221–238, 250–271, 275–297, and 310–332; these read TLFL…VNLL, LNAN…NTFY, GVIF…RLTL, GINA…LWLG, IVYL…AAIM, VSIA…PLMY, MIRV…SWLL, ISIP…FSLI, IVAW…LGLT, and PLIL…NVGI.

This sequence belongs to the UPF0324 family.

The protein resides in the cell membrane. This chain is UPF0324 membrane protein PM1461, found in Pasteurella multocida (strain Pm70).